The primary structure comprises 357 residues: MNTFGKKLTLTTFGESHGKAIGCILDGVPAGLRIDEAFIQSELDRRKPGKSKLETGRKEDDKVEILSGVFEGLSTGTPIAMIIFNTNQKSKDYDNVKDLFRPGHADFTYFHKYGIRDYRGGGRSSARETAARVAGGAVAKLMLKELGVEIQSGLCEVDGIKGNVQDFEYAKSSKLYALDPAVEAAQEEAILTAKENHDSVGGVVLTTATGVPVGLGEPLYYKLDAVLADAMMGINAAKAVEIGDGVASTHFKGSQNNDEITLQGFKSNHSGGTLGGISNGDTLIVKTHFKPTPSIFREQQTITTHDEEVVCNLKGRHDPCVAIRGAVVCEAMMALTLADMALLNMGKKMDHLKCIYG.

Arginine 46 provides a ligand contact to NADP(+). FMN is bound by residues 123–125 (RSS), 235–236 (NA), glycine 275, 290–294 (KPTPS), and arginine 316.

This sequence belongs to the chorismate synthase family. In terms of assembly, homotetramer. It depends on FMNH2 as a cofactor.

It carries out the reaction 5-O-(1-carboxyvinyl)-3-phosphoshikimate = chorismate + phosphate. It participates in metabolic intermediate biosynthesis; chorismate biosynthesis; chorismate from D-erythrose 4-phosphate and phosphoenolpyruvate: step 7/7. Functionally, catalyzes the anti-1,4-elimination of the C-3 phosphate and the C-6 proR hydrogen from 5-enolpyruvylshikimate-3-phosphate (EPSP) to yield chorismate, which is the branch point compound that serves as the starting substrate for the three terminal pathways of aromatic amino acid biosynthesis. This reaction introduces a second double bond into the aromatic ring system. In Sulfurovum sp. (strain NBC37-1), this protein is Chorismate synthase.